The following is a 236-amino-acid chain: Leucyl/phenylalanyl-tRNA--protein transferase (236 aa).

The protein belongs to the L/F-transferase family.

Its subcellular location is the cytoplasm. The enzyme catalyses N-terminal L-lysyl-[protein] + L-leucyl-tRNA(Leu) = N-terminal L-leucyl-L-lysyl-[protein] + tRNA(Leu) + H(+). It carries out the reaction N-terminal L-arginyl-[protein] + L-leucyl-tRNA(Leu) = N-terminal L-leucyl-L-arginyl-[protein] + tRNA(Leu) + H(+). The catalysed reaction is L-phenylalanyl-tRNA(Phe) + an N-terminal L-alpha-aminoacyl-[protein] = an N-terminal L-phenylalanyl-L-alpha-aminoacyl-[protein] + tRNA(Phe). Its function is as follows. Functions in the N-end rule pathway of protein degradation where it conjugates Leu, Phe and, less efficiently, Met from aminoacyl-tRNAs to the N-termini of proteins containing an N-terminal arginine or lysine. In Shewanella loihica (strain ATCC BAA-1088 / PV-4), this protein is Leucyl/phenylalanyl-tRNA--protein transferase.